A 67-amino-acid polypeptide reads, in one-letter code: Type 3 secretion system chaperone PscE (67 aa).

Positions 16-37 form a coiled coil; sequence HAAALRQRLQAALAECRRELAR.

Belongs to the YscE family. In terms of assembly, forms a stable ternary complex with PscF/SctF and PscG within the cytoplasm. Co-stabilized by PscG.

The protein resides in the cytoplasm. Functionally, chaperone of the type III secretion system (T3SS), also called injectisome, which is used to inject bacterial effector proteins into eukaryotic host cells, facilitating the establishment and dissemination of infection. Along with PscG, prevents premature polymerization of the PscF/SctF needle protein within the cytoplasm. Required for type III secretion needle assembly. Also required for cytotoxicity by influencing PscF/SctF levels. In Pseudomonas aeruginosa (strain ATCC 15692 / DSM 22644 / CIP 104116 / JCM 14847 / LMG 12228 / 1C / PRS 101 / PAO1), this protein is Type 3 secretion system chaperone PscE (pscE).